The primary structure comprises 218 residues: MRNSNTPIAAEGYPFIAGAVLIAVVLAVLGSKIPAFFFLAVFFGALTLFIVFFFRNPERTTPADENAVIAPADGVVIYLGPSREEHLGEEMTKISIFMSVFNVHVNRVPITGKVLDTFYIKGKFLDVRDDRATFENEQAGLIIETAKGMKMIVVQVAGLIARRIVCYAAKGDQLVRGKRYGLIRFGSRLDVYLPSETAVRVRMGDKTVAGETILGLLP.

Ser-187 serves as the catalytic Schiff-base intermediate with substrate; via pyruvic acid. Residue Ser-187 is modified to Pyruvic acid (Ser); by autocatalysis.

It belongs to the phosphatidylserine decarboxylase family. PSD-A subfamily. As to quaternary structure, heterodimer of a large membrane-associated beta subunit and a small pyruvoyl-containing alpha subunit. Pyruvate is required as a cofactor. In terms of processing, is synthesized initially as an inactive proenzyme. Formation of the active enzyme involves a self-maturation process in which the active site pyruvoyl group is generated from an internal serine residue via an autocatalytic post-translational modification. Two non-identical subunits are generated from the proenzyme in this reaction, and the pyruvate is formed at the N-terminus of the alpha chain, which is derived from the carboxyl end of the proenzyme. The post-translation cleavage follows an unusual pathway, termed non-hydrolytic serinolysis, in which the side chain hydroxyl group of the serine supplies its oxygen atom to form the C-terminus of the beta chain, while the remainder of the serine residue undergoes an oxidative deamination to produce ammonia and the pyruvoyl prosthetic group on the alpha chain.

Its subcellular location is the cell membrane. It catalyses the reaction a 1,2-diacyl-sn-glycero-3-phospho-L-serine + H(+) = a 1,2-diacyl-sn-glycero-3-phosphoethanolamine + CO2. Its pathway is phospholipid metabolism; phosphatidylethanolamine biosynthesis; phosphatidylethanolamine from CDP-diacylglycerol: step 2/2. In terms of biological role, catalyzes the formation of phosphatidylethanolamine (PtdEtn) from phosphatidylserine (PtdSer). The chain is Phosphatidylserine decarboxylase proenzyme from Geobacter metallireducens (strain ATCC 53774 / DSM 7210 / GS-15).